Consider the following 356-residue polypeptide: Glycerol-1-phosphate dehydrogenase [NAD(P)+] (356 aa).

Residues 103 to 107 (GRSID) and 125 to 128 (TAAS) each bind NAD(+). Asp-130 is a substrate binding site. An NAD(+)-binding site is contributed by Ser-134. Asp-177 provides a ligand contact to substrate. Residues Asp-177 and His-257 each contribute to the Zn(2+) site. Position 261 (His-261) interacts with substrate. Zn(2+) is bound at residue His-273.

This sequence belongs to the glycerol-1-phosphate dehydrogenase family. Zn(2+) serves as cofactor.

The protein resides in the cytoplasm. It catalyses the reaction sn-glycerol 1-phosphate + NAD(+) = dihydroxyacetone phosphate + NADH + H(+). It carries out the reaction sn-glycerol 1-phosphate + NADP(+) = dihydroxyacetone phosphate + NADPH + H(+). Its pathway is membrane lipid metabolism; glycerophospholipid metabolism. Its function is as follows. Catalyzes the NAD(P)H-dependent reduction of dihydroxyacetonephosphate (DHAP or glycerone phosphate) to glycerol 1-phosphate (G1P). The G1P thus generated is used as the glycerophosphate backbone of phospholipids in the cellular membranes of Archaea. The chain is Glycerol-1-phosphate dehydrogenase [NAD(P)+] from Methanosarcina mazei (strain ATCC BAA-159 / DSM 3647 / Goe1 / Go1 / JCM 11833 / OCM 88) (Methanosarcina frisia).